Consider the following 141-residue polypeptide: LOB domain-containing protein 34 (141 aa).

Residues 16–119 (NQCAACRHQR…SPLNYVAPVI (104 aa)) form the LOB domain.

It belongs to the LOB domain-containing protein family.

The sequence is that of LOB domain-containing protein 34 (LBD34) from Arabidopsis thaliana (Mouse-ear cress).